Here is a 355-residue protein sequence, read N- to C-terminus: NAD-dependent protein deacylase sirtuin-6 (355 aa).

Residue Ser2 is modified to N-acetylserine. Ser10 carries the phosphoserine; by MAPK8 modification. One can recognise a Deacetylase sirtuin-type domain in the interval 27–272 (PEELERKVWE…TRLMKHLGLE (246 aa)). Lys33 is subject to N6-acetyllysine. Positions 53, 57, 64, 65, 71, 113, and 133 each coordinate NAD(+). His133 serves as the catalytic Proton acceptor. 3 residues coordinate Zn(2+): Cys141, Cys144, and Cys166. Lys170 participates in a covalent cross-link: Glycyl lysine isopeptide (Lys-Gly) (interchain with G-Cter in ubiquitin). A Zn(2+)-binding site is contributed by Cys177. Residues Gly214, Ser216, Asn240, Gln242, and Val258 each coordinate NAD(+). Residues 284–355 (RALPPLPRPP…KRVKAKAVPS (72 aa)) are disordered. Pro residues predominate over residues 287-296 (PPLPRPPTPK). Phosphothreonine is present on Thr294. A phosphoserine mark is found at Ser303 and Ser330. Basic residues predominate over residues 343–355 (RPPKRVKAKAVPS).

This sequence belongs to the sirtuin family. Class IV subfamily. In terms of assembly, homodimer; binds to nucleosomes and DNA ends as a homodimer. Interacts with RELA; interferes with RELA binding to target DNA. Interacts with SMARCA5; promoting recruitment of SMARCA5/SNF2H to double-strand breaks (DSBs) sites. Interacts with the mTORC2 complex; preventing the ability of SIRT6 to deacetylate FOXO1. Interacts with the CLOCK-BMAL1 complex; recruited by the CLOCK-BMAL1 complex to regulate expression of clock-controlled genes. Interacts with CSNK2A2; preventing CSNK2A2 localization to the nucleus. As to quaternary structure, (Microbial infection) Interacts with Kaposi's sarcoma-associated herpesvirus protein VIRF-1; this interaction prevents SIRT6 deubiquitination by USP10. Zn(2+) serves as cofactor. Post-translationally, acetylated at Lys-33. Deacetylation at Lys-33 by SIRT1 promotes homomultimerization and binding to double-strand breaks (DSBs) sites. Phosphorylation at Ser-10 by MAPK8/JNK1 in response to oxidative stress stimulates the mono-ADP-ribosyltransferase activity on PARP1, leading to PARP1 recruitment to double-strand breaks (DSBs). In terms of processing, monoubiquitinated at Lys-170 by STUB1/CHIP, preventing its degradation by the proteasome. Deubiquitinated by USP10, also preventing its degradation by the proteasome. Post-translationally, sumoylated, leading to specifically decrease ability to deacetylate histone H3 at 'Lys-56' (H3K56ac).

It localises to the nucleus. It is found in the chromosome. Its subcellular location is the telomere. The protein resides in the endoplasmic reticulum. It carries out the reaction N(6)-acetyl-L-lysyl-[protein] + NAD(+) + H2O = 2''-O-acetyl-ADP-D-ribose + nicotinamide + L-lysyl-[protein]. The catalysed reaction is N(6)-tetradecanoyl-L-lysyl-[protein] + NAD(+) + H2O = 2''-O-tetradecanoyl-ADP-D-ribose + nicotinamide + L-lysyl-[protein]. The enzyme catalyses N(6)-hexadecanoyl-L-lysyl-[protein] + NAD(+) + H2O = 2''-O-hexadecanoyl-ADP-D-ribose + nicotinamide + L-lysyl-[protein]. It catalyses the reaction L-lysyl-[protein] + NAD(+) = N(6)-(ADP-D-ribosyl)-L-lysyl-[protein] + nicotinamide + H(+). It carries out the reaction L-arginyl-[protein] + NAD(+) = N(omega)-(ADP-D-ribosyl)-L-arginyl-[protein] + nicotinamide + H(+). Compared to the defatty-acylase activity, the protein deacetylase activity is weak in vitro, and requires activation. The histone deacetylase activity is strongly activated upon binding to nucleosomes and chromatin in vivo. Two molecules of SIRT6 associate with the acidic patch of one nucleosome, while the C-terminal disordered region of SIRT6 associates with nucleosomal DNA, leading to efficient histone deacetylation. The protein-lysine deacetylase activity is also activated by long-chain free fatty-acids. The histone deacetylase activity is specifically repressed by long non-coding RNA lncPRESS1, which binds to SIRT6 and prevents chromatin-binding, thereby promoting stem cell pluripotency. Due to its essential role as tumor suppressor and involvement in DNA repair and life span, extensive research is made for the identification of small compound regulators of SIRT6. Nitro-fatty acids (nitro-oleic acid and nitro-conjugated linoleic acid) strongly stimulate the protein-lysine deacetylase activity by forming a covalent Michael adduct formation with Cys-18. Activated by UBCS039 (4-(pyridin-3-yl)-4,5- dihydropyrrolo[1,2-a]quinoxaline). Inhibited by non-selective hydroxamate trichostatin A inhibitor. Deacetylase activity is activated by fluvastatin and quercetin-based compounds. The protein-lysine deacetylase activity, but not the defatty-acylase activity, is specifically activated by MDL-800 and MDL-801 activators in vivo, enhancing the histone deacetylase and tumor suppressor activities. MDL-800 and MDL-801 selectively activate SIRT6 and not other members of the sirtuin family. The binding-mode of MDL-801 is however subject to discussion. Functionally, NAD-dependent protein deacetylase, deacylase and mono-ADP-ribosyltransferase that plays an essential role in DNA damage repair, telomere maintenance, metabolic homeostasis, inflammation, tumorigenesis and aging. Displays protein-lysine deacetylase or defatty-acylase (demyristoylase and depalmitoylase) activity, depending on the context. Acts as a key histone deacetylase by catalyzing deacetylation of histone H3 at 'Lys-9', 'Lys-18' and 'Lys-56' (H3K9ac, H3K18ac and H3K56ac, respectively), suppressing target gene expression of several transcription factors, including NF-kappa-B. Acts as an inhibitor of transcription elongation by mediating deacetylation of H3K9ac and H3K56ac, preventing release of NELFE from chromatin and causing transcriptional pausing. Involved in DNA repair by promoting double-strand break (DSB) repair: acts as a DSB sensor by recognizing and binding DSB sites, leading to (1) recruitment of DNA repair proteins, such as SMARCA5/SNF2H, and (2) deacetylation of histone H3K9ac and H3K56ac. SIRT6 participation to DSB repair is probably involved in extension of life span. Also promotes DNA repair by deacetylating non-histone proteins, such as DDB2 and p53/TP53. Specifically deacetylates H3K18ac at pericentric heterochromatin, thereby maintaining pericentric heterochromatin silencing at centromeres and protecting against genomic instability and cellular senescence. Involved in telomere maintenance by catalyzing deacetylation of histone H3 in telomeric chromatin, regulating telomere position effect and telomere movement in response to DNA damage. Required for embryonic stem cell differentiation by mediating histone deacetylation of H3K9ac. Plays a major role in metabolism by regulating processes such as glycolysis, gluconeogenesis, insulin secretion and lipid metabolism. Inhibits glycolysis via histone deacetylase activity and by acting as a corepressor of the transcription factor HIF1A, thereby controlling the expression of multiple glycolytic genes. Has tumor suppressor activity by repressing glycolysis, thereby inhibiting the Warburg effect. Also regulates glycolysis and tumorigenesis by mediating deacetylation and nuclear export of non-histone proteins, such as isoform M2 of PKM (PKM2). Acts as a negative regulator of gluconeogenesis by mediating deacetylation of non-histone proteins, such as FOXO1 and KAT2A/GCN5. Promotes beta-oxidation of fatty acids during fasting by catalyzing deacetylation of NCOA2, inducing coactivation of PPARA. Acts as a regulator of lipid catabolism in brown adipocytes, both by catalyzing deacetylation of histones and non-histone proteins, such as FOXO1. Also acts as a regulator of circadian rhythms, both by regulating expression of clock-controlled genes involved in lipid and carbohydrate metabolism, and by catalyzing deacetylation of PER2. The defatty-acylase activity is specifically involved in regulation of protein secretion. Has high activity toward long-chain fatty acyl groups and mediates protein-lysine demyristoylation and depalmitoylation of target proteins, such as RRAS2 and TNF, thereby regulating their secretion. Also acts as a mono-ADP-ribosyltransferase by mediating mono-ADP-ribosylation of PARP1, TRIM28/KAP1 or SMARCC2/BAF170. Mono-ADP-ribosyltransferase activity is involved in DNA repair, cellular senescence, repression of LINE-1 retrotransposon elements and regulation of transcription. In Homo sapiens (Human), this protein is NAD-dependent protein deacylase sirtuin-6.